The sequence spans 81 residues: Beta-defensin 34 (81 aa).

Residues 1–20 (MKTFLFLFAVLFFWSQPRMH) form the signal peptide. Intrachain disulfides connect C28/C55, C35/C49, and C39/C56. Over residues 62–72 (CGRSKGNQSDE) the composition is skewed to polar residues. Residues 62–81 (CGRSKGNQSDEGSGHMGTRG) are disordered.

It belongs to the beta-defensin family. In terms of tissue distribution, only expressed in epididymis (caput, corpus and cauda).

It is found in the secreted. Its function is as follows. Has antibacterial activity. This is Beta-defensin 34 (Defb34) from Mus musculus (Mouse).